The primary structure comprises 300 residues: Interferon-stimulated gene 20 kDa protein (300 aa).

Mn(2+)-binding residues include D11, E13, D90, and H93.

It belongs to the exonuclease superfamily. Associates with PML and SP100 in the PML NB complex. Associates with survival motor neuron protein (SMN)-containing macromolecular nuclear complexes and U1 and U2 snRNAs and U3 snoRNA. It depends on Mn(2+) as a cofactor.

Its subcellular location is the nucleus. It localises to the nucleolus. It is found in the cytoplasm. The protein resides in the cajal body. The protein localises to the P-body. It carries out the reaction Exonucleolytic cleavage in the 3'- to 5'-direction to yield nucleoside 5'-phosphates.. Its function is as follows. Interferon-induced antiviral exoribonuclease that acts mainly on single-stranded RNA. Inhibition of several viruses does not involve the degradation of viral RNAs, but rather the inhibition of translation of viral proteins. Exerts a translational control over a large panel of non-self RNA substrates while sparing endogenous transcripts. This activity correlates with the protein's ability to localize in cytoplasmic processing bodies. May also act as master regulator of over hundred interferon stimulated genes leading to viral genome translation inhibition. May play additional roles in the maturation of snRNAs and rRNAs, and in ribosome biogenesis. This Mus musculus (Mouse) protein is Interferon-stimulated gene 20 kDa protein (Isg20).